The chain runs to 417 residues: MSSISNELSVTSSQNVISNSKEQRKKKILFKCALTNTISDVLTNREGWAQTQGDDWQFFWVTREWMTTCYDKHKFSEKQMICHFRNDFELTRKDFLIKNYKKARKAKEKSGIDVVSEFNFLPSSYVLPTEYHLFVEEFRKYPNDTIWIMKPVAGAQGKGIFLFRKLKHVQEWKKKDSSGSEALPYVVQCYVHNPYLVGGKKFDVRIYVLVTSFRPLNAWVHREGFARFSHSRYSTDSVDDAFVHLTNVAVAKTAADYDPERGLKWSLPKLFRFFKSVHGQSKLSKTMNDLTNVIIESLKSVQNLIIQDNHCFELYGYDILFDENLKPWLLEVNASPSLTASSQEDFELKYRILNHMIDVLDIEKKLIGNENEVGGFDLLIKNSKPVELCKVDFHTQPFFGTQFNLRLGDYVEATPMP.

Residues 23–372 (QRKKKILFKC…EKKLIGNENE (350 aa)) enclose the TTL domain. Residues 188–191 (QCYV), lysine 201, and aspartate 203 contribute to the ATP site.

The protein belongs to the tubulin--tyrosine ligase family. As to expression, expressed in head sensory neurons.

In terms of biological role, polyglutamylase that forms polyglutamate side chains on tubulin. Acts when complexed with other proteins. Appears to be dispensable for polar spindle formation in dividing embryonic cells, for cilia-dependent osmotic avoidance and for male mating behavior. Probably by regulating microtubule stability via the glutamylation of tubulin, regulates PLM axon developmental growth. This chain is Probable tubulin polyglutamylase ttll-9, found in Caenorhabditis elegans.